Consider the following 409-residue polypeptide: Broad specificity amino-acid racemase (409 aa).

Positions 1-24 (MPFRRTLLAASLALLITGQAPLYA) are cleaved as a signal peptide. C71 and C97 are joined by a disulfide. K75 serves as the catalytic Proton acceptor. Position 75 is an N6-(pyridoxal phosphate)lysine (K75). R174 provides a ligand contact to substrate. Y301 acts as the Proton acceptor in catalysis. M349 provides a ligand contact to substrate.

This sequence belongs to the alanine racemase family. Bsr subfamily. It depends on pyridoxal 5'-phosphate as a cofactor.

The protein localises to the periplasm. The catalysed reaction is an L-alpha-amino acid = a D-alpha-amino acid. It carries out the reaction L-lysine = D-lysine. It catalyses the reaction L-arginine = D-arginine. The enzyme catalyses L-glutamine = D-glutamine. Its function is as follows. Amino-acid racemase able to utilize a broad range of substrates. Reversibly racemizes 9 of the 19 natural chiral amino acids known, including both positively charged amino acids (Lys, Arg and His) and non-beta-branched aliphatic amino acids (Ala, Leu, Met, Ser, Gln and Asn). Among these amino acids, activity is the highest with lysine and arginine, and poor or very poor with the others. Plays a primary role in the catabolism of basic amino acid, that allows P.putida strain KT2440 to grow on L-Lys and L-Arg as the sole source of carbon and nitrogen, through conversion to their respective D-enantiomers. The protein is Broad specificity amino-acid racemase of Pseudomonas putida (strain ATCC 47054 / DSM 6125 / CFBP 8728 / NCIMB 11950 / KT2440).